The sequence spans 303 residues: 4-diphosphocytidyl-2-C-methyl-D-erythritol kinase (303 aa).

The active site involves Lys24. Position 111 to 121 (111 to 121 (PIASGIGGGSA)) interacts with ATP. The active site involves Asp153.

The protein belongs to the GHMP kinase family. IspE subfamily.

The enzyme catalyses 4-CDP-2-C-methyl-D-erythritol + ATP = 4-CDP-2-C-methyl-D-erythritol 2-phosphate + ADP + H(+). The protein operates within isoprenoid biosynthesis; isopentenyl diphosphate biosynthesis via DXP pathway; isopentenyl diphosphate from 1-deoxy-D-xylulose 5-phosphate: step 3/6. Its function is as follows. Catalyzes the phosphorylation of the position 2 hydroxy group of 4-diphosphocytidyl-2C-methyl-D-erythritol. The protein is 4-diphosphocytidyl-2-C-methyl-D-erythritol kinase of Rhizobium johnstonii (strain DSM 114642 / LMG 32736 / 3841) (Rhizobium leguminosarum bv. viciae).